We begin with the raw amino-acid sequence, 395 residues long: Pyridinium-3,5-bisthiocarboxylic acid mononucleotide nickel insertion protein (395 aa).

The protein belongs to the LarC family.

The enzyme catalyses Ni(II)-pyridinium-3,5-bisthiocarboxylate mononucleotide = pyridinium-3,5-bisthiocarboxylate mononucleotide + Ni(2+). In terms of biological role, involved in the biosynthesis of a nickel-pincer cofactor ((SCS)Ni(II) pincer complex). Binds Ni(2+), and functions in nickel delivery to pyridinium-3,5-bisthiocarboxylic acid mononucleotide (P2TMN), to form the mature cofactor. Is thus probably required for the activation of nickel-pincer cofactor-dependent enzymes. In Staphylococcus epidermidis (strain ATCC 12228 / FDA PCI 1200), this protein is Pyridinium-3,5-bisthiocarboxylic acid mononucleotide nickel insertion protein.